A 200-amino-acid chain; its full sequence is uncharacterized protein (200 aa).

Residues 3–119 (RLFIAEDQRM…DLADAIRKCV (117 aa)) enclose the Response regulatory domain. Asp54 bears the 4-aspartylphosphate mark. The 66-residue stretch at 133 to 198 (MMRDENPLTV…EAASIAEEKG (66 aa)) folds into the HTH luxR-type domain. Positions 157–176 (TKDITLELYLSQGTVRNYIS) form a DNA-binding region, H-T-H motif.

In terms of processing, phosphorylated by YvfT.

The protein resides in the cytoplasm. Its function is as follows. Member of the two-component regulatory system YvfT/YvfU. This is an uncharacterized protein from Bacillus subtilis (strain 168).